A 207-amino-acid chain; its full sequence is HTH-type transcriptional regulator AqdR (207 aa).

In terms of domain architecture, HTH tetR-type spans 16 to 76 (ARFRERVLDA…DALLTRTQAE (61 aa)). Positions 39 to 58 (GFADVARKAGVNGVSLYRRW) form a DNA-binding region, H-T-H motif.

Its function is as follows. May regulate the expression of genes involved in the degradation of the Pseudomonas aeruginosa quorum sensing signal molecules HHQ (2-heptyl-4-quinolone) and PQS (2-heptyl-3-hydroxy-4-quinolone). The protein is HTH-type transcriptional regulator AqdR of Rhodococcus erythropolis (Arthrobacter picolinophilus).